The sequence spans 389 residues: Succinate--CoA ligase [ADP-forming] subunit beta (389 aa).

The ATP-grasp domain occupies 9-244 (KQLLAEYGIP…KTQEDETEVT (236 aa)). Residues Lys-46, 53 to 55 (GRG), Gly-102, and Glu-107 contribute to the ATP site. The Mg(2+) site is built by Asn-199 and Asp-213. Residues Asn-264 and 321-323 (GIV) each bind substrate.

Belongs to the succinate/malate CoA ligase beta subunit family. In terms of assembly, heterotetramer of two alpha and two beta subunits. Mg(2+) serves as cofactor.

It catalyses the reaction succinate + ATP + CoA = succinyl-CoA + ADP + phosphate. The enzyme catalyses GTP + succinate + CoA = succinyl-CoA + GDP + phosphate. It participates in carbohydrate metabolism; tricarboxylic acid cycle; succinate from succinyl-CoA (ligase route): step 1/1. Functionally, succinyl-CoA synthetase functions in the citric acid cycle (TCA), coupling the hydrolysis of succinyl-CoA to the synthesis of either ATP or GTP and thus represents the only step of substrate-level phosphorylation in the TCA. The beta subunit provides nucleotide specificity of the enzyme and binds the substrate succinate, while the binding sites for coenzyme A and phosphate are found in the alpha subunit. The polypeptide is Succinate--CoA ligase [ADP-forming] subunit beta (Xanthomonas campestris pv. campestris (strain 8004)).